The sequence spans 487 residues: Iron-sulfur cluster assembly SufBD family protein ycf24 (487 aa).

Belongs to the iron-sulfur cluster assembly SufBD family.

The protein resides in the plastid. The protein localises to the chloroplast. This Porphyra purpurea (Red seaweed) protein is Iron-sulfur cluster assembly SufBD family protein ycf24 (ycf24).